The primary structure comprises 916 residues: Rab3 GTPase-activating protein catalytic subunit (916 aa).

The segment at 530-574 (NSKRKSEGMVGKASSEEEEDEDDDEGEFFDCDDLTAGAGSPTKAV) is disordered. Ser-543 and Ser-544 each carry phosphoserine. Acidic residues predominate over residues 545–562 (EEEEDEDDDEGEFFDCDD).

It belongs to the Rab3-GAP catalytic subunit family. As to quaternary structure, the Rab3 GTPase-activating complex is a heterodimer composed of Rab3GAP1 and Rab3-GAP.

The protein resides in the cytoplasm. In terms of biological role, catalytic subunit of the Rab3 GTPase-activating (Rab3GAP) complex composed of Rab3-GAP and Rab3GAP1, which has both GTPase-activating protein (GAP) activity towards Rab3, and guanine nucleotide exchange factor (GEF) activity towards Rab18. As part of the Rab3GAP complex, required for the rapid induction and sustained expression of synaptic homeostasis at the neuromuscular junction (NMJ). Also participates in the regulation of autophagy in tissues such as larval fat cells and adult muscles. The Rab3GAP complex, acts as a GAP for Rab3 by converting active Rab3-GTP to the inactive form Rab3-GDP. At the neuromuscular junction (NMJ), forms a presynaptic signaling mechanism with Rab3 that regulates progression of synaptic homeostasis at a late stage of vesicle release. Within this mechanism Rab3-GTP acts, directly or indirectly, to inhibit the progression of synaptic homeostasis, and Rab3-GAP functions to inactivate this action of Rab3-GTP. The Rab3GAP complex, acts as a GEF for Rab18 by promoting the conversion of inactive Rab18-GDP to the active form Rab18-GTP. Regulates autophagy as part of a Rab3GAP-Rab18 module. Once Rab18 is activated by the GEF Rab3GAP complex, the Rab3GAP-Rab18 module localizes to autophagosomes, and regulates autolysosome formation and maturation together with the Rab18 interacting effector, the PI3K/Vps34 Complex I. The protein is Rab3 GTPase-activating protein catalytic subunit of Drosophila melanogaster (Fruit fly).